The chain runs to 730 residues: Transient receptor potential cation channel subfamily V member 5 (730 aa).

Residues 1-327 lie on the Cytoplasmic side of the membrane; sequence MGACPPKAKG…SFKWKKYGRP (327 aa). 6 ANK repeats span residues 44–74, 78–107, 116–145, 162–191, 195–228, and 239–268; these read IRDSPLLQAAKENDLRLLKILLLNQSCDFQQ, VGETALHVAALYDNLEAATLLMEAAPELAK, VGQTALHIAVMNQNLNLVRALLARGASVSA, YGEHPLSFAACVGSEEIVRLLIEHGADIRA, LGNTVLHILILQPNKTFACQMYNLLLSYDEHSDH, and QGLTPFKLAGVEGNTVMFQHLMQKRKHVQW. Residues 328 to 348 form a helical membrane-spanning segment; that stretch reads YFCVLASLYILYMICFTTCCI. Residues 349 to 385 lie on the Extracellular side of the membrane; that stretch reads YRPLKLRDDNRTDPRDITILQQKLLQEAYVTHQDNIR. Asn358 is a glycosylation site (N-linked (GlcNAc...) asparagine). A helical membrane pass occupies residues 386–408; that stretch reads LVGELVTVTGAVIILLLEIPDIF. The Cytoplasmic portion of the chain corresponds to 409 to 419; sequence RVGASRYFGQT. A helical transmembrane segment spans residues 420 to 442; sequence ILGGPFHVIIITYASLVLLTMVM. Topologically, residues 443–448 are extracellular; the sequence is RLTNMN. A helical transmembrane segment spans residues 449–469; it reads GEVVPLSFALVLGWCSVMYFA. Topologically, residues 470 to 492 are cytoplasmic; that stretch reads RGFQMLGPFTIMIQKMIFGDLMR. The helical transmembrane segment at 493–513 threads the bilayer; sequence FCWLMAVVILGFASAFHITFQ. The pore-forming intramembrane region spans 524–544; it reads SDYPTALFSTFELFLTIIDGP. Asp542 provides a ligand contact to Ca(2+). The helical transmembrane segment at 557 to 577 threads the bilayer; the sequence is ITYAAFAIIATLLMLNLFIAM. Over 578–730 the chain is Cytoplasmic; it reads MGDTHWRVAQ…EGDGEEVYHF (153 aa). Residues 598-602 are interaction with S100A10; the sequence is VATTV. The involved in Ca(2+)-dependent inactivation stretch occupies residues 650 to 653; it reads AFKC. At Thr685 the chain carries Phosphothreonine. At Ser689 the chain carries Phosphoserine. Residues 701 to 730 are involved in Ca(2+)-dependent inactivation; that stretch reads GWEILRRNTLGHLNLGLDLGEGDGEEVYHF.

It belongs to the transient receptor (TC 1.A.4) family. TrpV subfamily. TRPV5 sub-subfamily. Homotetramer. Probably forms heterotetramers with TRPV6. Interacts with TRPV6. Interacts with S100A10 and probably with the ANAX2-S100A10 heterotetramer. The interaction with S100A10 is required for the trafficking to the plasma membrane. Interacts with calmodulin. Interacts with BSPRY, which results in its inactivation. Glycosylated. As to expression, detected in kidney cortex, in distal convoluted tubules and cortical collecting ducts (at protein level). Detected in duodenum, jejunum, ileum, kidney and placenta.

The protein localises to the cell membrane. It localises to the apical cell membrane. The catalysed reaction is Ca(2+)(in) = Ca(2+)(out). Its activity is regulated as follows. Activated by WNK3. Constitutively active calcium selective cation channel thought to be involved in Ca(2+) reabsorption in kidney and intestine. Required for normal Ca(2+) reabsorption in the kidney distal convoluted tubules. The channel is activated by low internal calcium level and the current exhibits an inward rectification. A Ca(2+)-dependent feedback regulation includes fast channel inactivation and slow current decay. Heteromeric assembly with TRPV6 seems to modify channel properties. TRPV5-TRPV6 heteromultimeric concatemers exhibit voltage-dependent gating. The protein is Transient receptor potential cation channel subfamily V member 5 (Trpv5) of Oryctolagus cuniculus (Rabbit).